Reading from the N-terminus, the 311-residue chain is Probable manganese-dependent inorganic pyrophosphatase (311 aa).

H9, D13, D15, D77, H99, and D151 together coordinate Mn(2+).

Belongs to the PPase class C family. Requires Mn(2+) as cofactor.

Its subcellular location is the cytoplasm. It catalyses the reaction diphosphate + H2O = 2 phosphate + H(+). In Streptococcus sanguinis (strain SK36), this protein is Probable manganese-dependent inorganic pyrophosphatase.